Consider the following 135-residue polypeptide: MAGRGKAIGAGAAKKATSRSSKAGLQFPVGRIARFLKAGKYAERVGAGAPVYLAAVLEYLAAEVLELAGNAARDNKKTRIVPRHIQLAVRNDEELTKLLGGATIASGGVMPNIHQHLLPKKASSSKVSTVDDDDN.

This sequence belongs to the histone H2A family. As to quaternary structure, the nucleosome is a histone octamer containing two molecules each of H2A, H2B, H3 and H4 assembled in one H3-H4 heterotetramer and two H2A-H2B heterodimers. The octamer wraps approximately 147 bp of DNA. Expressed preferentially in meristematic tissues of young seedlings, in stigma and ovary but not in pollen.

The protein resides in the nucleus. Its subcellular location is the chromosome. Core component of nucleosome. Nucleosomes wrap and compact DNA into chromatin, limiting DNA accessibility to the cellular machineries which require DNA as a template. Histones thereby play a central role in transcription regulation, DNA repair, DNA replication and chromosomal stability. DNA accessibility is regulated via a complex set of post-translational modifications of histones, also called histone code, and nucleosome remodeling. The sequence is that of Histone H2A.4 (TH254) from Triticum aestivum (Wheat).